The following is a 298-amino-acid chain: ATP synthase gamma chain (298 aa).

This sequence belongs to the ATPase gamma chain family. As to quaternary structure, F-type ATPases have 2 components, CF(1) - the catalytic core - and CF(0) - the membrane proton channel. CF(1) has five subunits: alpha(3), beta(3), gamma(1), delta(1), epsilon(1). CF(0) has three main subunits: a, b and c.

Its subcellular location is the cell membrane. In terms of biological role, produces ATP from ADP in the presence of a proton gradient across the membrane. The gamma chain is believed to be important in regulating ATPase activity and the flow of protons through the CF(0) complex. In Parafrankia sp. (strain EAN1pec), this protein is ATP synthase gamma chain.